The sequence spans 293 residues: Glutamyl-Q tRNA(Asp) synthetase (293 aa).

Residues 26 to 30 (RFAPS) and Asp62 each bind L-glutamate. The 'HIGH' region motif lies at 29-39 (PSPTGLLHLGN). Zn(2+) contacts are provided by Cys118, Cys120, Tyr131, and Cys135. Residues Tyr178 and Arg196 each coordinate L-glutamate. Positions 234–238 (KLSKR) match the 'KMSKS' region motif. ATP is bound at residue Lys237.

Belongs to the class-I aminoacyl-tRNA synthetase family. GluQ subfamily. Zn(2+) is required as a cofactor.

Its function is as follows. Catalyzes the tRNA-independent activation of glutamate in presence of ATP and the subsequent transfer of glutamate onto a tRNA(Asp). Glutamate is transferred on the 2-amino-5-(4,5-dihydroxy-2-cyclopenten-1-yl) moiety of the queuosine in the wobble position of the QUC anticodon. The protein is Glutamyl-Q tRNA(Asp) synthetase of Synechococcus sp. (strain CC9605).